Here is a 376-residue protein sequence, read N- to C-terminus: Partitioning defective 6 homolog gamma (376 aa).

Residues alanine 18–arginine 98 enclose the PB1 domain. The segment at arginine 127–asparagine 254 is interaction with PARD3 and CDC42. The Pseudo-CRIB domain occupies isoleucine 134–leucine 151. A PDZ domain is found at arginine 158–asparagine 251. Residues proline 356 to leucine 376 form a disordered region. Over residues valine 367–leucine 376 the composition is skewed to basic and acidic residues.

The protein belongs to the PAR6 family. Interacts with PARD3. Interacts with GTP-bound forms of CDC42, RHOQ/TC10 and RAC1. Interacts with the N-terminal part of PRKCI and PRKCZ. As to expression, widely expressed, with a higher expression in fetal and adult kidney.

The protein resides in the cytoplasm. It is found in the cell membrane. Its subcellular location is the cell junction. It localises to the tight junction. Its function is as follows. Adapter protein involved in asymmetrical cell division and cell polarization processes. May play a role in the formation of epithelial tight junctions. The PARD6-PARD3 complex links GTP-bound Rho small GTPases to atypical protein kinase C proteins. This Homo sapiens (Human) protein is Partitioning defective 6 homolog gamma (PARD6G).